Consider the following 38-residue polypeptide: Large ribosomal subunit protein bL36 (38 aa).

This sequence belongs to the bacterial ribosomal protein bL36 family.

This chain is Large ribosomal subunit protein bL36, found in Buchnera aphidicola subsp. Baizongia pistaciae (strain Bp).